Consider the following 610-residue polypeptide: Methionine--tRNA ligase (610 aa).

The short motif at 12–22 (PYANGPRHIGH) is the 'HIGH' region element. Residues C144, C147, C157, and C160 each contribute to the Zn(2+) site. Positions 348–352 (KFSSS) match the 'KMSKS' region motif. S351 contributes to the ATP binding site.

The protein belongs to the class-I aminoacyl-tRNA synthetase family. MetG type 1 subfamily. Monomer. Requires Zn(2+) as cofactor.

The protein resides in the cytoplasm. It carries out the reaction tRNA(Met) + L-methionine + ATP = L-methionyl-tRNA(Met) + AMP + diphosphate. Its function is as follows. Is required not only for elongation of protein synthesis but also for the initiation of all mRNA translation through initiator tRNA(fMet) aminoacylation. This Corynebacterium diphtheriae (strain ATCC 700971 / NCTC 13129 / Biotype gravis) protein is Methionine--tRNA ligase.